Consider the following 289-residue polypeptide: ATP synthase gamma chain (289 aa).

Belongs to the ATPase gamma chain family. In terms of assembly, F-type ATPases have 2 components, CF(1) - the catalytic core - and CF(0) - the membrane proton channel. CF(1) has five subunits: alpha(3), beta(3), gamma(1), delta(1), epsilon(1). CF(0) has three main subunits: a, b and c.

The protein localises to the cell inner membrane. Its function is as follows. Produces ATP from ADP in the presence of a proton gradient across the membrane. The gamma chain is believed to be important in regulating ATPase activity and the flow of protons through the CF(0) complex. The sequence is that of ATP synthase gamma chain from Leptospira biflexa serovar Patoc (strain Patoc 1 / ATCC 23582 / Paris).